The following is a 419-amino-acid chain: Serine--tRNA ligase (419 aa).

226-228 (TSE) contributes to the L-serine binding site. Residues 257–259 (RRE) and Val-273 contribute to the ATP site. An L-serine-binding site is contributed by Glu-280. 344–347 (ELTS) serves as a coordination point for ATP. L-serine is bound at residue Thr-379.

Belongs to the class-II aminoacyl-tRNA synthetase family. Type-1 seryl-tRNA synthetase subfamily. In terms of assembly, homodimer. The tRNA molecule binds across the dimer.

The protein localises to the cytoplasm. It carries out the reaction tRNA(Ser) + L-serine + ATP = L-seryl-tRNA(Ser) + AMP + diphosphate + H(+). The catalysed reaction is tRNA(Sec) + L-serine + ATP = L-seryl-tRNA(Sec) + AMP + diphosphate + H(+). It participates in aminoacyl-tRNA biosynthesis; selenocysteinyl-tRNA(Sec) biosynthesis; L-seryl-tRNA(Sec) from L-serine and tRNA(Sec): step 1/1. Catalyzes the attachment of serine to tRNA(Ser). Is also able to aminoacylate tRNA(Sec) with serine, to form the misacylated tRNA L-seryl-tRNA(Sec), which will be further converted into selenocysteinyl-tRNA(Sec). The sequence is that of Serine--tRNA ligase from Mycolicibacterium vanbaalenii (strain DSM 7251 / JCM 13017 / BCRC 16820 / KCTC 9966 / NRRL B-24157 / PYR-1) (Mycobacterium vanbaalenii).